We begin with the raw amino-acid sequence, 255 residues long: tRNA pseudouridine synthase A (255 aa).

Catalysis depends on Asp-60, which acts as the Nucleophile. Residue Tyr-118 coordinates substrate.

This sequence belongs to the tRNA pseudouridine synthase TruA family. As to quaternary structure, homodimer.

It catalyses the reaction uridine(38/39/40) in tRNA = pseudouridine(38/39/40) in tRNA. In terms of biological role, formation of pseudouridine at positions 38, 39 and 40 in the anticodon stem and loop of transfer RNAs. The polypeptide is tRNA pseudouridine synthase A (Leuconostoc mesenteroides subsp. mesenteroides (strain ATCC 8293 / DSM 20343 / BCRC 11652 / CCM 1803 / JCM 6124 / NCDO 523 / NBRC 100496 / NCIMB 8023 / NCTC 12954 / NRRL B-1118 / 37Y)).